We begin with the raw amino-acid sequence, 160 residues long: Small ribosomal subunit protein uS7 (160 aa).

Belongs to the universal ribosomal protein uS7 family. Part of the 30S ribosomal subunit. Contacts proteins S9 and S11.

Its function is as follows. One of the primary rRNA binding proteins, it binds directly to 16S rRNA where it nucleates assembly of the head domain of the 30S subunit. Is located at the subunit interface close to the decoding center, probably blocks exit of the E-site tRNA. The polypeptide is Small ribosomal subunit protein uS7 (Ehrlichia chaffeensis (strain ATCC CRL-10679 / Arkansas)).